A 62-amino-acid polypeptide reads, in one-letter code: Protein YmcF (62 aa).

Belongs to the YmcF/YnqF peptide family.

The sequence is that of Protein YmcF from Escherichia coli (strain K12).